We begin with the raw amino-acid sequence, 302 residues long: Acetylglutamate kinase (302 aa).

Substrate is bound by residues 67-68, R89, and N189; that span reads GG.

Belongs to the acetylglutamate kinase family. ArgB subfamily.

It is found in the cytoplasm. It catalyses the reaction N-acetyl-L-glutamate + ATP = N-acetyl-L-glutamyl 5-phosphate + ADP. It participates in amino-acid biosynthesis; L-arginine biosynthesis; N(2)-acetyl-L-ornithine from L-glutamate: step 2/4. Functionally, catalyzes the ATP-dependent phosphorylation of N-acetyl-L-glutamate. The polypeptide is Acetylglutamate kinase (Streptomyces clavuligerus).